We begin with the raw amino-acid sequence, 78 residues long: Ubiquitin-like protein 1 (78 aa).

It belongs to the ubiquitin family.

This chain is Ubiquitin-like protein 1 (ubl1), found in Schizosaccharomyces pombe (strain 972 / ATCC 24843) (Fission yeast).